The sequence spans 396 residues: 1-deoxy-D-xylulose 5-phosphate reductoisomerase (396 aa).

Residues Thr13, Gly14, Ser15, Ile16, and Asn127 each coordinate NADPH. Lys128 lines the 1-deoxy-D-xylulose 5-phosphate pocket. Glu129 contributes to the NADPH binding site. Asp153 is a binding site for Mn(2+). 1-deoxy-D-xylulose 5-phosphate is bound by residues Ser154, Glu155, Ser184, and His207. Glu155 serves as a coordination point for Mn(2+). Gly213 provides a ligand contact to NADPH. Ser220, Asn225, Lys226, and Glu229 together coordinate 1-deoxy-D-xylulose 5-phosphate. Glu229 provides a ligand contact to Mn(2+).

It belongs to the DXR family. It depends on Mg(2+) as a cofactor. Mn(2+) serves as cofactor.

It catalyses the reaction 2-C-methyl-D-erythritol 4-phosphate + NADP(+) = 1-deoxy-D-xylulose 5-phosphate + NADPH + H(+). The protein operates within isoprenoid biosynthesis; isopentenyl diphosphate biosynthesis via DXP pathway; isopentenyl diphosphate from 1-deoxy-D-xylulose 5-phosphate: step 1/6. Its function is as follows. Catalyzes the NADPH-dependent rearrangement and reduction of 1-deoxy-D-xylulose-5-phosphate (DXP) to 2-C-methyl-D-erythritol 4-phosphate (MEP). This Pseudomonas savastanoi pv. phaseolicola (strain 1448A / Race 6) (Pseudomonas syringae pv. phaseolicola (strain 1448A / Race 6)) protein is 1-deoxy-D-xylulose 5-phosphate reductoisomerase.